Consider the following 264-residue polypeptide: MVTMKDLLECGVHFGHQTRRWNPKMKRFIFGVRKNIHIIDLQKTLRYFRYTYNIIKQAASEGKVIMFVGTKRQASETLKQYAESVNAPYVNYRWLGGMLTNFSTIKKSIRRLEIIEEMESSGQIDLLTKKEKLMLQRKKEKLDKYLGGVRHMKKAPDMIFVIDAAKEKIAVAEARRLGIPVVAPLDTNCDPDMVDYPIPGNDDAIRSIQLFCKEISEAILEGRSENKDEQNEQGEQIAPVTNEEKQEILDEVTAEVATQMQEEA.

The tract at residues 222–246 (GRSENKDEQNEQGEQIAPVTNEEKQ) is disordered.

This sequence belongs to the universal ribosomal protein uS2 family.

This is Small ribosomal subunit protein uS2 from Helicobacter hepaticus (strain ATCC 51449 / 3B1).